The sequence spans 94 residues: DNA-directed RNA polymerase subunit omega (94 aa).

The protein belongs to the RNA polymerase subunit omega family. In terms of assembly, the RNAP catalytic core consists of 2 alpha, 1 beta, 1 beta' and 1 omega subunit. When a sigma factor is associated with the core the holoenzyme is formed, which can initiate transcription.

The enzyme catalyses RNA(n) + a ribonucleoside 5'-triphosphate = RNA(n+1) + diphosphate. Its function is as follows. Promotes RNA polymerase assembly. Latches the N- and C-terminal regions of the beta' subunit thereby facilitating its interaction with the beta and alpha subunits. In Shewanella pealeana (strain ATCC 700345 / ANG-SQ1), this protein is DNA-directed RNA polymerase subunit omega.